Reading from the N-terminus, the 256-residue chain is Acetyl-coenzyme A carboxylase carboxyl transferase subunit alpha (256 aa).

Residues 1-236 (MTDVARILKE…KLHLIDEITQ (236 aa)) enclose the CoA carboxyltransferase C-terminal domain.

Belongs to the AccA family. As to quaternary structure, acetyl-CoA carboxylase is a heterohexamer composed of biotin carboxyl carrier protein (AccB), biotin carboxylase (AccC) and two subunits each of ACCase subunit alpha (AccA) and ACCase subunit beta (AccD).

It localises to the cytoplasm. It catalyses the reaction N(6)-carboxybiotinyl-L-lysyl-[protein] + acetyl-CoA = N(6)-biotinyl-L-lysyl-[protein] + malonyl-CoA. The protein operates within lipid metabolism; malonyl-CoA biosynthesis; malonyl-CoA from acetyl-CoA: step 1/1. In terms of biological role, component of the acetyl coenzyme A carboxylase (ACC) complex. First, biotin carboxylase catalyzes the carboxylation of biotin on its carrier protein (BCCP) and then the CO(2) group is transferred by the carboxyltransferase to acetyl-CoA to form malonyl-CoA. This chain is Acetyl-coenzyme A carboxylase carboxyl transferase subunit alpha, found in Streptococcus equi subsp. zooepidemicus (strain H70).